The sequence spans 393 residues: MKDSDSLLHVHPAYSLKQLTQYFLKLGALGFGGPIALVGYMHRDLVEERQWVSEAEYQEGLTLAQVAPGPLAAQLSFYLGYVHYGFLGSALVGLAFVLPSFLIVVALGWAYTLYGGLNWMQAVFYGVGAAVIGIIAISAYKLTRKTVGTSWLLWSIYLVNAATTIVTESERVELILGSGALVLLVKFPPKHWIKQNRLNSFIGLPLIPLFAAVPTATTSLLGQIALFFTQAGAFVFGSGLAIVPFLYGGVVKDFGWLNSQQFLDAVAVAMITPGPVVITTGFIGFLVAGFPGACVAAIAMFIPCYLLTVIPAPYFKKHGKNPKISTFVNGVTVAATGAIAGAVVVLGRQSLHDLPTFLIGLIALISSWKLGKKLPEPLIIVIAAIAGVIFWSK.

10 consecutive transmembrane segments (helical) span residues 22–42, 90–110, 119–139, 146–166, 201–221, 231–251, 261–281, 282–302, 327–347, and 370–390; these read YFLKLGALGFGGPIALVGYMH, ALVGLAFVLPSFLIVVALGWA, WMQAVFYGVGAAVIGIIAISA, TVGTSWLLWSIYLVNAATTIV, FIGLPLIPLFAAVPTATTSLL, AGAFVFGSGLAIVPFLYGGVV, QFLDAVAVAMITPGPVVITTG, FIGFLVAGFPGACVAAIAMFI, FVNGVTVAATGAIAGAVVVLG, and LGKKLPEPLIIVIAAIAGVIF.

Belongs to the chromate ion transporter (CHR) (TC 2.A.51) family.

The protein resides in the cell membrane. In terms of biological role, may function in the active transport of chromate into the cell under sulfur-deficient conditions. In Synechococcus elongatus (strain ATCC 33912 / PCC 7942 / FACHB-805) (Anacystis nidulans R2), this protein is Probable chromate transport protein (srpC).